Reading from the N-terminus, the 289-residue chain is Acetyl-coenzyme A carboxylase carboxyl transferase subunit beta (289 aa).

The region spanning 36-289 is the CoA carboxyltransferase N-terminal domain; the sequence is MWLRCPHCHQ…LLKTGSVANE (254 aa). Residues cysteine 40, cysteine 43, cysteine 58, and cysteine 61 each contribute to the Zn(2+) site. Residues 40–61 form a C4-type zinc finger; that stretch reads CPHCHQLLFAKQLTQYAVCPNC.

This sequence belongs to the AccD/PCCB family. Acetyl-CoA carboxylase is a heterohexamer composed of biotin carboxyl carrier protein (AccB), biotin carboxylase (AccC) and two subunits each of ACCase subunit alpha (AccA) and ACCase subunit beta (AccD). Zn(2+) is required as a cofactor.

Its subcellular location is the cytoplasm. It catalyses the reaction N(6)-carboxybiotinyl-L-lysyl-[protein] + acetyl-CoA = N(6)-biotinyl-L-lysyl-[protein] + malonyl-CoA. Its pathway is lipid metabolism; malonyl-CoA biosynthesis; malonyl-CoA from acetyl-CoA: step 1/1. Its function is as follows. Component of the acetyl coenzyme A carboxylase (ACC) complex. Biotin carboxylase (BC) catalyzes the carboxylation of biotin on its carrier protein (BCCP) and then the CO(2) group is transferred by the transcarboxylase to acetyl-CoA to form malonyl-CoA. The chain is Acetyl-coenzyme A carboxylase carboxyl transferase subunit beta from Limosilactobacillus reuteri subsp. reuteri (strain JCM 1112) (Lactobacillus reuteri).